The chain runs to 545 residues: CTP synthase (545 aa).

Residues 1 to 266 (MTTNYIFVTG…DDYICKRFSL (266 aa)) form an amidoligase domain region. Residue Ser14 participates in CTP binding. Ser14 serves as a coordination point for UTP. ATP contacts are provided by residues 15–20 (SLGKGI) and Asp72. Residues Asp72 and Glu140 each coordinate Mg(2+). CTP is bound by residues 147–149 (DIE), 187–192 (KTKPTQ), and Lys223. Residues 187 to 192 (KTKPTQ) and Lys223 contribute to the UTP site. Residue 239–241 (KDV) coordinates ATP. The region spanning 291–542 (TIGMVGKYIE…VKAASEYQKR (252 aa)) is the Glutamine amidotransferase type-1 domain. L-glutamine is bound at residue Gly352. Cys379 (nucleophile; for glutamine hydrolysis) is an active-site residue. Residues 380–383 (LGMQ), Glu403, and Arg470 each bind L-glutamine. Active-site residues include His515 and Glu517.

Belongs to the CTP synthase family. In terms of assembly, homotetramer.

The enzyme catalyses UTP + L-glutamine + ATP + H2O = CTP + L-glutamate + ADP + phosphate + 2 H(+). It catalyses the reaction L-glutamine + H2O = L-glutamate + NH4(+). The catalysed reaction is UTP + NH4(+) + ATP = CTP + ADP + phosphate + 2 H(+). It functions in the pathway pyrimidine metabolism; CTP biosynthesis via de novo pathway; CTP from UDP: step 2/2. With respect to regulation, allosterically activated by GTP, when glutamine is the substrate; GTP has no effect on the reaction when ammonia is the substrate. The allosteric effector GTP functions by stabilizing the protein conformation that binds the tetrahedral intermediate(s) formed during glutamine hydrolysis. Inhibited by the product CTP, via allosteric rather than competitive inhibition. Its function is as follows. Catalyzes the ATP-dependent amination of UTP to CTP with either L-glutamine or ammonia as the source of nitrogen. Regulates intracellular CTP levels through interactions with the four ribonucleotide triphosphates. This Klebsiella pneumoniae subsp. pneumoniae (strain ATCC 700721 / MGH 78578) protein is CTP synthase.